A 1110-amino-acid polypeptide reads, in one-letter code: Ribosome assembly protein 1 (1110 aa).

Positions 17–262 (SCIRNICIVA…QKLGAKRENL (246 aa)) constitute a tr-type G domain. Residues 26 to 33 (AHVDHGKT), 102 to 106 (DSPGH), and 156 to 159 (NKID) each bind GTP. Residue Ser-431 is modified to Phosphoserine.

Belongs to the TRAFAC class translation factor GTPase superfamily. Classic translation factor GTPase family.

The protein resides in the cytoplasm. It catalyses the reaction GTP + H2O = GDP + phosphate + H(+). GTPase activity is stimulated in the presence of 60S subunits. GTPase involved in the biogenesis of the 60S ribosomal subunit and translational activation of ribosomes. Together with SDO1, may trigger the GTP-dependent release of TIF6 from 60S pre-ribosomes in the cytoplasm, thereby activating ribosomes for translation competence by allowing 80S ribosome assembly and facilitating TIF6 recycling to the nucleus, where it is required for 60S rRNA processing and nuclear export. Inhibits GTPase activity of ribosome-bound EF-2. This is Ribosome assembly protein 1 (RIA1) from Saccharomyces cerevisiae (strain ATCC 204508 / S288c) (Baker's yeast).